Here is a 212-residue protein sequence, read N- to C-terminus: Kynurenine formamidase (212 aa).

Position 17 (Trp-17) interacts with substrate. The Zn(2+) site is built by His-48, His-52, and Asp-54. His-58 acts as the Proton donor/acceptor in catalysis. Residues His-161 and Glu-173 each coordinate Zn(2+).

Belongs to the Cyclase 1 superfamily. KynB family. In terms of assembly, homodimer. It depends on Zn(2+) as a cofactor.

The enzyme catalyses N-formyl-L-kynurenine + H2O = L-kynurenine + formate + H(+). Its pathway is amino-acid degradation; L-tryptophan degradation via kynurenine pathway; L-kynurenine from L-tryptophan: step 2/2. In terms of biological role, catalyzes the hydrolysis of N-formyl-L-kynurenine to L-kynurenine, the second step in the kynurenine pathway of tryptophan degradation. The protein is Kynurenine formamidase of Salinibacter ruber (strain DSM 13855 / M31).